The following is a 175-amino-acid chain: ATP synthase subunit delta (175 aa).

The protein belongs to the ATPase delta chain family. As to quaternary structure, F-type ATPases have 2 components, F(1) - the catalytic core - and F(0) - the membrane proton channel. F(1) has five subunits: alpha(3), beta(3), gamma(1), delta(1), epsilon(1). F(0) has three main subunits: a(1), b(2) and c(10-14). The alpha and beta chains form an alternating ring which encloses part of the gamma chain. F(1) is attached to F(0) by a central stalk formed by the gamma and epsilon chains, while a peripheral stalk is formed by the delta and b chains.

The protein localises to the cell inner membrane. F(1)F(0) ATP synthase produces ATP from ADP in the presence of a proton or sodium gradient. F-type ATPases consist of two structural domains, F(1) containing the extramembraneous catalytic core and F(0) containing the membrane proton channel, linked together by a central stalk and a peripheral stalk. During catalysis, ATP synthesis in the catalytic domain of F(1) is coupled via a rotary mechanism of the central stalk subunits to proton translocation. In terms of biological role, this protein is part of the stalk that links CF(0) to CF(1). It either transmits conformational changes from CF(0) to CF(1) or is implicated in proton conduction. In Xanthomonas oryzae pv. oryzae (strain MAFF 311018), this protein is ATP synthase subunit delta.